The sequence spans 242 residues: Ubiquinone biosynthesis O-methyltransferase (242 aa).

The S-adenosyl-L-methionine site is built by arginine 36, glycine 56, aspartate 77, and methionine 130.

The protein belongs to the methyltransferase superfamily. UbiG/COQ3 family.

It catalyses the reaction a 3-demethylubiquinol + S-adenosyl-L-methionine = a ubiquinol + S-adenosyl-L-homocysteine + H(+). It carries out the reaction a 3-(all-trans-polyprenyl)benzene-1,2-diol + S-adenosyl-L-methionine = a 2-methoxy-6-(all-trans-polyprenyl)phenol + S-adenosyl-L-homocysteine + H(+). The protein operates within cofactor biosynthesis; ubiquinone biosynthesis. In terms of biological role, O-methyltransferase that catalyzes the 2 O-methylation steps in the ubiquinone biosynthetic pathway. In Pasteurella multocida (strain Pm70), this protein is Ubiquinone biosynthesis O-methyltransferase.